The sequence spans 445 residues: V-type proton ATPase subunit H (445 aa).

Belongs to the V-ATPase H subunit family. As to quaternary structure, V-ATPase is a heteromultimeric enzyme composed of a peripheral catalytic V1 complex (components A to H) attached to an integral membrane V0 proton pore complex (components: a, c, c', c'' and d).

Its function is as follows. Subunit of the peripheral V1 complex of vacuolar ATPase. Subunit H activates the ATPase activity of the enzyme and couples ATPase activity to proton flow. Vacuolar ATPase is responsible for acidifying a variety of intracellular compartments in eukaryotic cells, thus providing most of the energy required for transport processes in the vacuolar system. The sequence is that of V-type proton ATPase subunit H (vatH) from Dictyostelium discoideum (Social amoeba).